We begin with the raw amino-acid sequence, 368 residues long: Interferon-stimulated 20 kDa exonuclease-like 2 (368 aa).

Disordered regions lie at residues 33–107 (FLEQ…APSK) and 127–187 (PKTK…PTVP). Residues 42–54 (KKNQPPNKVSKLN) show a composition bias toward polar residues. Basic and acidic residues predominate over residues 77–96 (KKKEAAASKRDSERSKDKKA). Positions 131-145 (STQKKGSKKKSLKKK) are enriched in basic residues. Positions 194–368 (MVAIDCEMVG…QHLAQNPPEN (175 aa)) constitute an Exonuclease domain.

It localises to the nucleus. The protein localises to the nucleolus. Functionally, 3'-&gt; 5'-exoribonuclease involved in ribosome biogenesis in the processing of the 12S pre-rRNA. Displays a strong specificity for a 3'-end containing a free hydroxyl group. The protein is Interferon-stimulated 20 kDa exonuclease-like 2 (Isg20l2) of Mus musculus (Mouse).